A 105-amino-acid chain; its full sequence is Zinc metalloproteinase/disintegrin (105 aa).

In terms of domain architecture, Peptidase M12B spans Asp1 to Pro3. Residues Pro11–Asn96 enclose the Disintegrin domain. 6 disulfide bridges follow: Cys25–Cys43, Cys27–Cys38, Cys37–Cys60, Cys51–Cys57, Cys56–Cys82, and Cys69–Cys89. A D/ECD-tripeptide motif is present at residues Glu75 to Asp77. Positions Pro99–Gly105 are excised as a propeptide.

This sequence belongs to the venom metalloproteinase (M12B) family. P-III subfamily. Monomer. Zn(2+) serves as cofactor. In terms of tissue distribution, expressed by the venom gland.

The protein resides in the secreted. Impairs hemostasis in the envenomed animal. Its function is as follows. Inhibits platelet aggregation induced by ADP, thrombin, platelet-activating factor and collagen. Acts by inhibiting fibrinogen interaction with platelet receptors GPIIb/GPIIIa (ITGA2B/ITGB3). This Gloydius brevicauda (Korean slamosa snake) protein is Zinc metalloproteinase/disintegrin.